Here is a 371-residue protein sequence, read N- to C-terminus: T-cell acute lymphocytic leukemia protein 1 (371 aa).

The tract at residues 1 to 71 (MMEKRQPELC…DVPLQNSSNG (71 aa)) is disordered. A compositionally biased stretch (basic and acidic residues) spans 34–57 (GCKEDEESKREEGDKEGGGRFKGD). A bHLH domain is found at 204–256 (VRRIFTNSRERWRQQNVNGAFAELRKLIPTHPPDKKLSKNEILRLAMKYISFL). The interval 263–371 (QDGGRNVSST…GRPLDGSSRR (109 aa)) is disordered. Basic and acidic residues predominate over residues 293-305 (HQDRVVGLARDDI). Residues 321 to 335 (GDADGSPESFMEDQD) are compositionally biased toward acidic residues.

In terms of tissue distribution, expressed in the main hemopoietic organs in adults, namely the kidney and the spleen. Also expressed in the liver, brain, gill and gonads.

It localises to the nucleus. Functionally, transcription factor that plays a pivotal role in hemopoietic and endothelial development. This is T-cell acute lymphocytic leukemia protein 1 from Takifugu rubripes (Japanese pufferfish).